A 207-amino-acid polypeptide reads, in one-letter code: Small ribosomal subunit protein uS4 (207 aa).

The segment at 33–54 (KLDSKPGQHGRTSGARTSDYGN) is disordered. The segment covering 42–53 (GRTSGARTSDYG) has biased composition (polar residues). The region spanning 97-157 (SRLDNVVYRM…EKSKKQVRIA (61 aa)) is the S4 RNA-binding domain.

Belongs to the universal ribosomal protein uS4 family. Part of the 30S ribosomal subunit. Contacts protein S5. The interaction surface between S4 and S5 is involved in control of translational fidelity.

One of the primary rRNA binding proteins, it binds directly to 16S rRNA where it nucleates assembly of the body of the 30S subunit. In terms of biological role, with S5 and S12 plays an important role in translational accuracy. In Ralstonia pickettii (strain 12J), this protein is Small ribosomal subunit protein uS4.